The chain runs to 748 residues: E3 ubiquitin-protein ligase DTX3L (748 aa).

Residue Ala2 is modified to N-acetylalanine. Ser9 carries the phosphoserine modification. Disordered regions lie at residues 94 to 117 (DLRP…PSLT), 209 to 238 (EQKR…PPDQ), and 528 to 562 (QETP…PAAS). Residues 101 to 117 (SLTQPVETPSSRPPSLT) show a composition bias toward polar residues. 2 stretches are compositionally biased toward basic and acidic residues: residues 209–219 (EQKRKGSEQKR) and 227–236 (TPPDVEREPP). At Ser215 the chain carries Phosphoserine. At Ser536 the chain carries Phosphoserine. Residues 569 to 608 (CVICMDTISNKHVLPKCKHEFCTSCISKAMLIKPVCPVCL) form an RING-type zinc finger.

Belongs to the Deltex family. Homodimer and heterodimer. Can heterodimerize with DTX1, enhancing its ubiquitin ligase activity in vitro. Interacts (via N-terminus) with ADP ribosyltransferase PARP9/BAL1 (via PARP catalytic domain) forming a stable complex; the interaction is required to activate PARP9 but is dispensable for DTX3L catalytic activity. Forms a complex with STAT1 and PARP9 independently of IFNB1 or IFNG-mediated STAT1 'Tyr-701' phosphorylation. Found in a complex with PARP9, STAT1 and H2BC9. Found in a complex with E3 ligase ITCH and ESCRT-0 components HGS and STAM. Interacts (via C-terminus) with ITCH; the interaction is increased upon CXCL12 stimulation and inhibits ITCH catalytic activity; the interaction is direct. Interacts with HGS and STAM; the interaction brings together HGS and STAM and promotes their recruitment to early endosomes. Post-translationally, autoubiquitinated.

It localises to the cytoplasm. The protein resides in the nucleus. It is found in the early endosome membrane. Its subcellular location is the lysosome membrane. The enzyme catalyses S-ubiquitinyl-[E2 ubiquitin-conjugating enzyme]-L-cysteine + [acceptor protein]-L-lysine = [E2 ubiquitin-conjugating enzyme]-L-cysteine + N(6)-ubiquitinyl-[acceptor protein]-L-lysine.. Its pathway is protein modification; protein ubiquitination. Binding to PARP9 enhances DTX3L catalytic activity. In terms of biological role, E3 ubiquitin-protein ligase which, in association with ADP-ribosyltransferase PARP9, plays a role in DNA damage repair and in interferon-mediated antiviral responses. Monoubiquitinates several histones, including histone H2A, H2B, H3 and H4. In response to DNA damage, mediates monoubiquitination of 'Lys-91' of histone H4 (H4K91ub1). The exact role of H4K91ub1 in DNA damage response is still unclear but it may function as a licensing signal for additional histone H4 post-translational modifications such as H4 'Lys-20' methylation (H4K20me). PARP1-dependent PARP9-DTX3L-mediated ubiquitination promotes the rapid and specific recruitment of 53BP1/TP53BP1, UIMC1/RAP80, and BRCA1 to DNA damage sites. By monoubiquitinating histone H2B H2BC9/H2BJ and thereby promoting chromatin remodeling, positively regulates STAT1-dependent interferon-stimulated gene transcription and thus STAT1-mediated control of viral replication. Independently of its catalytic activity, promotes the sorting of chemokine receptor CXCR4 from early endosome to lysosome following CXCL12 stimulation by reducing E3 ligase ITCH activity and thus ITCH-mediated ubiquitination of endosomal sorting complex required for transport ESCRT-0 components HGS and STAM. In addition, required for the recruitment of HGS and STAM to early endosomes. The chain is E3 ubiquitin-protein ligase DTX3L (Dtx3l) from Mus musculus (Mouse).